The following is a 335-amino-acid chain: Holliday junction branch migration complex subunit RuvB (335 aa).

The tract at residues 1-183 (MDERIISSET…FGVIDHLEFY (183 aa)) is large ATPase domain (RuvB-L). ATP contacts are provided by residues leucine 22, arginine 23, glycine 64, lysine 67, threonine 68, threonine 69, 130 to 132 (EDY), arginine 173, tyrosine 183, and arginine 220. Threonine 68 is a Mg(2+) binding site. The tract at residues 184–254 (TEEQLTEIVL…LAKEALTLLQ (71 aa)) is small ATPAse domain (RuvB-S). Positions 257-335 (PRGLDTIDQK…HLGISYEKEV (79 aa)) are head domain (RuvB-H). Residues arginine 293, arginine 312, and arginine 317 each contribute to the DNA site.

The protein belongs to the RuvB family. Homohexamer. Forms an RuvA(8)-RuvB(12)-Holliday junction (HJ) complex. HJ DNA is sandwiched between 2 RuvA tetramers; dsDNA enters through RuvA and exits via RuvB. An RuvB hexamer assembles on each DNA strand where it exits the tetramer. Each RuvB hexamer is contacted by two RuvA subunits (via domain III) on 2 adjacent RuvB subunits; this complex drives branch migration. In the full resolvosome a probable DNA-RuvA(4)-RuvB(12)-RuvC(2) complex forms which resolves the HJ.

Its subcellular location is the cytoplasm. It catalyses the reaction ATP + H2O = ADP + phosphate + H(+). Functionally, the RuvA-RuvB-RuvC complex processes Holliday junction (HJ) DNA during genetic recombination and DNA repair, while the RuvA-RuvB complex plays an important role in the rescue of blocked DNA replication forks via replication fork reversal (RFR). RuvA specifically binds to HJ cruciform DNA, conferring on it an open structure. The RuvB hexamer acts as an ATP-dependent pump, pulling dsDNA into and through the RuvAB complex. RuvB forms 2 homohexamers on either side of HJ DNA bound by 1 or 2 RuvA tetramers; 4 subunits per hexamer contact DNA at a time. Coordinated motions by a converter formed by DNA-disengaged RuvB subunits stimulates ATP hydrolysis and nucleotide exchange. Immobilization of the converter enables RuvB to convert the ATP-contained energy into a lever motion, pulling 2 nucleotides of DNA out of the RuvA tetramer per ATP hydrolyzed, thus driving DNA branch migration. The RuvB motors rotate together with the DNA substrate, which together with the progressing nucleotide cycle form the mechanistic basis for DNA recombination by continuous HJ branch migration. Branch migration allows RuvC to scan DNA until it finds its consensus sequence, where it cleaves and resolves cruciform DNA. The chain is Holliday junction branch migration complex subunit RuvB from Listeria monocytogenes serotype 4b (strain CLIP80459).